Here is a 489-residue protein sequence, read N- to C-terminus: Glutamate--tRNA ligase (489 aa).

The short motif at 11 to 21 (PSPTGHLHIGG) is the 'HIGH' region element. Zn(2+) contacts are provided by cysteine 108, cysteine 110, cysteine 136, and histidine 138. The 'KMSKS' region motif lies at 253–257 (KLSKR). Residue lysine 256 coordinates ATP.

It belongs to the class-I aminoacyl-tRNA synthetase family. Glutamate--tRNA ligase type 1 subfamily. In terms of assembly, monomer. Zn(2+) serves as cofactor.

It is found in the cytoplasm. It carries out the reaction tRNA(Glu) + L-glutamate + ATP = L-glutamyl-tRNA(Glu) + AMP + diphosphate. Catalyzes the attachment of glutamate to tRNA(Glu) in a two-step reaction: glutamate is first activated by ATP to form Glu-AMP and then transferred to the acceptor end of tRNA(Glu). The protein is Glutamate--tRNA ligase of Geobacillus thermodenitrificans (strain NG80-2).